We begin with the raw amino-acid sequence, 60 residues long: Pepsin-3 (60 aa).

The propeptide at 1–35 (INVPLTRHKSMRESLREKGIELPYQDPAIKYRPEF) is activation peptide.

This sequence belongs to the peptidase A1 family.

This Thunnus orientalis (North Pacific bluefin tuna) protein is Pepsin-3.